The primary structure comprises 141 residues: Large ribosomal subunit protein uL16 (141 aa).

Belongs to the universal ribosomal protein uL16 family. Part of the 50S ribosomal subunit.

In terms of biological role, binds 23S rRNA and is also seen to make contacts with the A and possibly P site tRNAs. The protein is Large ribosomal subunit protein uL16 of Microchaete diplosiphon (Fremyella diplosiphon).